The chain runs to 164 residues: Transcription elongation factor GreA (164 aa).

A coiled-coil region spans residues 11–76; that stretch reads EESYDRLKAE…LQELLNNAKV (66 aa).

This sequence belongs to the GreA/GreB family.

Its function is as follows. Necessary for efficient RNA polymerase transcription elongation past template-encoded arresting sites. The arresting sites in DNA have the property of trapping a certain fraction of elongating RNA polymerases that pass through, resulting in locked ternary complexes. Cleavage of the nascent transcript by cleavage factors such as GreA or GreB allows the resumption of elongation from the new 3'terminus. GreA releases sequences of 2 to 3 nucleotides. The protein is Transcription elongation factor GreA of Mycolicibacterium vanbaalenii (strain DSM 7251 / JCM 13017 / BCRC 16820 / KCTC 9966 / NRRL B-24157 / PYR-1) (Mycobacterium vanbaalenii).